The primary structure comprises 611 residues: DNA mismatch repair protein MutL (611 aa).

Residues N364–T384 form a disordered region.

It belongs to the DNA mismatch repair MutL/HexB family.

In terms of biological role, this protein is involved in the repair of mismatches in DNA. It is required for dam-dependent methyl-directed DNA mismatch repair. May act as a 'molecular matchmaker', a protein that promotes the formation of a stable complex between two or more DNA-binding proteins in an ATP-dependent manner without itself being part of a final effector complex. In Rickettsia bellii (strain OSU 85-389), this protein is DNA mismatch repair protein MutL.